We begin with the raw amino-acid sequence, 430 residues long: DD-carboxypeptidase/endopeptidase Mpg (430 aa).

Zn(2+) contacts are provided by H295, D299, and H375.

Belongs to the peptidase M23B family. As to quaternary structure, monomer. Requires Zn(2+) as cofactor. In terms of processing, likely to be synthesized as a proenzyme. The cleavage of the N-terminal domain is probably required for the activation of the enzyme.

It is found in the cell outer membrane. Has both endopeptidase and DD-carboxypeptidase activities. Degrades cell wall peptidoglycan (PG) to allow consummate expression of pili. This Neisseria meningitidis serogroup B (strain ATCC BAA-335 / MC58) protein is DD-carboxypeptidase/endopeptidase Mpg.